A 588-amino-acid chain; its full sequence is Aspartate--tRNA ligase (588 aa).

Glu-171 contributes to the L-aspartate binding site. Positions 195 to 198 (QLFK) are aspartate. L-aspartate is bound at residue Arg-217. ATP is bound by residues 217–219 (RDE) and Gln-226. His-447 is an L-aspartate binding site. Glu-481 is an ATP binding site. Arg-488 contributes to the L-aspartate binding site. Position 533-536 (533-536 (GLDR)) interacts with ATP.

It belongs to the class-II aminoacyl-tRNA synthetase family. Type 1 subfamily. As to quaternary structure, homodimer.

Its subcellular location is the cytoplasm. The catalysed reaction is tRNA(Asp) + L-aspartate + ATP = L-aspartyl-tRNA(Asp) + AMP + diphosphate. Functionally, catalyzes the attachment of L-aspartate to tRNA(Asp) in a two-step reaction: L-aspartate is first activated by ATP to form Asp-AMP and then transferred to the acceptor end of tRNA(Asp). This is Aspartate--tRNA ligase from Aeromonas salmonicida (strain A449).